The sequence spans 313 residues: Undecaprenyl-diphosphatase (313 aa).

A run of 6 helical transmembrane segments spans residues 121 to 141 (YRIG…GFLF), 152 to 172 (LWLV…AEHY), 187 to 207 (GLVM…RSGA), 225 to 245 (FSFL…LPDA), 259 to 279 (QLLV…AWLL), and 290 to 310 (FVGY…AGVI).

It belongs to the UppP family.

It localises to the cell membrane. It carries out the reaction di-trans,octa-cis-undecaprenyl diphosphate + H2O = di-trans,octa-cis-undecaprenyl phosphate + phosphate + H(+). In terms of biological role, catalyzes the dephosphorylation of undecaprenyl diphosphate (UPP). Confers resistance to bacitracin. This Nocardia farcinica (strain IFM 10152) protein is Undecaprenyl-diphosphatase.